The sequence spans 292 residues: MSEIRLYVTTTEIKAGEILDLMSDYFGEEDVAIATTEVDEKRDIWEASVYLMAEQEEEFRERVSTLLAPAFPGLVIEKEIIPDVDWIAKSLEGLKPVRAGRFIVHGAHDRDKVQPHDLAIEIEAGQAFGTGHHGTTAGCLEMIEDVLRARKVRNALDLGTGSGVLAIAVRKMRPIPVLATDIDPIAVKVAKENVRLNGIVSGMALETAPGFHSDAFRKHGPFDLIIANILARPLIKMAPQLVTHLAPGGTVILSGILASQRWKVLSAYNGAKLSHIRTIWRNDWVTLHLRKD.

The S-adenosyl-L-methionine site is built by Thr-136, Gly-159, Asp-181, and Asn-228.

The protein belongs to the methyltransferase superfamily. PrmA family.

It is found in the cytoplasm. The enzyme catalyses L-lysyl-[protein] + 3 S-adenosyl-L-methionine = N(6),N(6),N(6)-trimethyl-L-lysyl-[protein] + 3 S-adenosyl-L-homocysteine + 3 H(+). Functionally, methylates ribosomal protein L11. In Agrobacterium fabrum (strain C58 / ATCC 33970) (Agrobacterium tumefaciens (strain C58)), this protein is Ribosomal protein L11 methyltransferase.